Consider the following 539-residue polypeptide: CTP synthase (539 aa).

Residues 1 to 268 (MSFKSIFLTG…SDFLLNKLGF (268 aa)) are amidoligase domain. Position 14 (Ser14) interacts with CTP. Residue Ser14 participates in UTP binding. 15–20 (SLGKGL) serves as a coordination point for ATP. An L-glutamine-binding site is contributed by Tyr55. Asp72 serves as a coordination point for ATP. Mg(2+)-binding residues include Asp72 and Glu142. Residues 149–151 (DIE), 188–193 (KTKPTQ), and Lys224 contribute to the CTP site. UTP is bound by residues 188 to 193 (KTKPTQ) and Lys224. The 239-residue stretch at 294 to 532 (RIGLVGKYLE…IRAAKAYSLE (239 aa)) folds into the Glutamine amidotransferase type-1 domain. Position 353 (Gly353) interacts with L-glutamine. Residue Cys380 is the Nucleophile; for glutamine hydrolysis of the active site. L-glutamine is bound by residues 381 to 384 (LGMQ), Glu404, and Arg460. Catalysis depends on residues His505 and Glu507.

It belongs to the CTP synthase family. In terms of assembly, homotetramer.

The enzyme catalyses UTP + L-glutamine + ATP + H2O = CTP + L-glutamate + ADP + phosphate + 2 H(+). It catalyses the reaction L-glutamine + H2O = L-glutamate + NH4(+). The catalysed reaction is UTP + NH4(+) + ATP = CTP + ADP + phosphate + 2 H(+). The protein operates within pyrimidine metabolism; CTP biosynthesis via de novo pathway; CTP from UDP: step 2/2. With respect to regulation, allosterically activated by GTP, when glutamine is the substrate; GTP has no effect on the reaction when ammonia is the substrate. The allosteric effector GTP functions by stabilizing the protein conformation that binds the tetrahedral intermediate(s) formed during glutamine hydrolysis. Inhibited by the product CTP, via allosteric rather than competitive inhibition. Catalyzes the ATP-dependent amination of UTP to CTP with either L-glutamine or ammonia as the source of nitrogen. Regulates intracellular CTP levels through interactions with the four ribonucleotide triphosphates. In Chlamydia trachomatis serovar L2 (strain ATCC VR-902B / DSM 19102 / 434/Bu), this protein is CTP synthase.